The following is a 400-amino-acid chain: Probable vacuolar protease A (400 aa).

The N-terminal stretch at 1–18 (MKGSLLLAGATLLGCTSA) is a signal peptide. Residues 19–72 (KLHSLKLKKVSLKEQLEHADIDVQIKSLGQKYMGIRPEQHEQQMFKEQTPIEVE) constitute a propeptide, activation peptide. In terms of domain architecture, Peptidase A1 spans 87-397 (YFSEISIGTP…DLGKGTVGLA (311 aa)). Aspartate 105 is an active-site residue. Cysteine 118 and cysteine 123 are disulfide-bonded. An N-linked (GlcNAc...) asparagine glycan is attached at asparagine 140. Aspartate 289 is a catalytic residue. The cysteines at positions 323 and 356 are disulfide-linked. N-linked (GlcNAc...) asparagine glycosylation occurs at asparagine 340.

The protein belongs to the peptidase A1 family.

It is found in the vacuole lumen. The protein localises to the secreted. The enzyme catalyses Hydrolysis of proteins with broad specificity for peptide bonds. Cleaves -Leu-Leu-|-Val-Tyr- bond in a synthetic substrate. Does not act on esters of Tyr or Arg.. Functionally, vacuolar aspartic endopeptidase which is probably also secreted and contributes to virulence. The polypeptide is Probable vacuolar protease A (PEP2) (Arthroderma benhamiae (strain ATCC MYA-4681 / CBS 112371) (Trichophyton mentagrophytes)).